The sequence spans 578 residues: Acyl-CoA ligase AFT1-1 (578 aa).

ATP is bound by residues 210–218 (SSGTSGAQK), 350–355 (QCYGAT), Asp-438, Arg-457, and Lys-554. The tract at residues 281–350 (GVEDLLSIVE…RHHPTWKIKQ (70 aa)) is SBD1. The SBD2 stretch occupies residues 351-413 (CYGATEAGTA…VSSPSLAIGY (63 aa)). Residues 576 to 578 (SKI) carry the Peroxisomal targeting signal type 1 motif.

This sequence belongs to the ATP-dependent AMP-binding enzyme family.

Its subcellular location is the peroxisome. It functions in the pathway mycotoxin biosynthesis. Acyl-CoA ligase; part of the gene clusters that mediate the biosynthesis of the host-selective toxins (HSTs) AF-toxins responsible for Alternaria black spot of strawberry disease by the strawberry pathotype. AF-toxin I and III are valine derivatives of 2,3-dyhydroxy-isovaleric acid and 2-hydroxy-isovaleric acid respectively, while AF II is an isoleucine derivative of 2-hydroxy-valeric acid. These derivatives are bound to a 9,10-epoxy-8-hydroxy-9-methyl-decatrienoic acid (EDA) moiety. On cellular level, AF-toxins affect plasma membrane of susceptible cells and cause a sudden increase in loss of K(+) after a few minutes of toxin treatment. The aldo-keto reductase AFTS1 catalyzes the conversion of 2-keto-isovaleric acid (2-KIV) to 2-hydroxy-isovaleric acid (2-HIV) by reduction of its ketone to an alcohol. The acyl-CoA ligase AFT1, the hydrolase AFT2 and the enoyl-CoA hydratases AFT3 and AFT6, but also the polyketide synthase AFT9, the acyl-CoA dehydrogenase AFT10, the cytochrome P450 monooxygenase AFT11 and the oxidoreductase AFT12 are all involved in the biosynthesis of the AK-, AF- and ACT-toxin common EDA structural moiety. The exact role of each enzyme, and of additional enzymes identified within the AF-toxin clusters have still to be determined. This chain is Acyl-CoA ligase AFT1-1, found in Alternaria alternata (Alternaria rot fungus).